A 391-amino-acid polypeptide reads, in one-letter code: DNA replication and repair protein RecF (391 aa).

Residue 30–37 participates in ATP binding; it reads GSNGQGKT.

It belongs to the RecF family.

The protein localises to the cytoplasm. Functionally, the RecF protein is involved in DNA metabolism; it is required for DNA replication and normal SOS inducibility. RecF binds preferentially to single-stranded, linear DNA. It also seems to bind ATP. This chain is DNA replication and repair protein RecF, found in Saccharopolyspora erythraea (strain ATCC 11635 / DSM 40517 / JCM 4748 / NBRC 13426 / NCIMB 8594 / NRRL 2338).